Consider the following 147-residue polypeptide: Large ribosomal subunit protein bL9 (147 aa).

It belongs to the bacterial ribosomal protein bL9 family.

Its function is as follows. Binds to the 23S rRNA. This chain is Large ribosomal subunit protein bL9, found in Exiguobacterium sp. (strain ATCC BAA-1283 / AT1b).